Consider the following 156-residue polypeptide: ATP synthase subunit b (156 aa).

A helical transmembrane segment spans residues 5 to 27 (ITLIGQMITFAIFVGFTMKFVWP).

The protein belongs to the ATPase B chain family. F-type ATPases have 2 components, F(1) - the catalytic core - and F(0) - the membrane proton channel. F(1) has five subunits: alpha(3), beta(3), gamma(1), delta(1), epsilon(1). F(0) has three main subunits: a(1), b(2) and c(10-14). The alpha and beta chains form an alternating ring which encloses part of the gamma chain. F(1) is attached to F(0) by a central stalk formed by the gamma and epsilon chains, while a peripheral stalk is formed by the delta and b chains.

It is found in the cell inner membrane. F(1)F(0) ATP synthase produces ATP from ADP in the presence of a proton or sodium gradient. F-type ATPases consist of two structural domains, F(1) containing the extramembraneous catalytic core and F(0) containing the membrane proton channel, linked together by a central stalk and a peripheral stalk. During catalysis, ATP synthesis in the catalytic domain of F(1) is coupled via a rotary mechanism of the central stalk subunits to proton translocation. In terms of biological role, component of the F(0) channel, it forms part of the peripheral stalk, linking F(1) to F(0). This Francisella tularensis subsp. tularensis (strain WY96-3418) protein is ATP synthase subunit b.